Consider the following 485-residue polypeptide: Aspartyl/glutamyl-tRNA(Asn/Gln) amidotransferase subunit B (485 aa).

The protein belongs to the GatB/GatE family. GatB subfamily. As to quaternary structure, heterotrimer of A, B and C subunits.

It catalyses the reaction L-glutamyl-tRNA(Gln) + L-glutamine + ATP + H2O = L-glutaminyl-tRNA(Gln) + L-glutamate + ADP + phosphate + H(+). The enzyme catalyses L-aspartyl-tRNA(Asn) + L-glutamine + ATP + H2O = L-asparaginyl-tRNA(Asn) + L-glutamate + ADP + phosphate + 2 H(+). In terms of biological role, allows the formation of correctly charged Asn-tRNA(Asn) or Gln-tRNA(Gln) through the transamidation of misacylated Asp-tRNA(Asn) or Glu-tRNA(Gln) in organisms which lack either or both of asparaginyl-tRNA or glutaminyl-tRNA synthetases. The reaction takes place in the presence of glutamine and ATP through an activated phospho-Asp-tRNA(Asn) or phospho-Glu-tRNA(Gln). The sequence is that of Aspartyl/glutamyl-tRNA(Asn/Gln) amidotransferase subunit B from Bordetella petrii (strain ATCC BAA-461 / DSM 12804 / CCUG 43448).